Consider the following 201-residue polypeptide: Twist-related protein 1 (201 aa).

Over residues 1–18 the composition is skewed to low complexity; it reads MMQDVSSSPVSPADDSLS. The tract at residues 1-106 is disordered; that stretch reads MMQDVSSSPV…GGGSPQSYEE (106 aa). Positions 34–43 are enriched in basic residues; that stretch reads RGGRKRRSSR. Composition is skewed to gly residues over residues 46–65 and 80–100; these read AGGG…GGDE and GCGG…GGGS. In terms of domain architecture, bHLH spans 109–160; the sequence is TQRVMANVRERQRTQSLNEAFAALPKIIPTLPSDKLSKIQTLKLAARYIDFL. The tract at residues 162-190 is sufficient for transactivation activity; that stretch reads QVLQSDELDSKMASYVAHERLSYAFSVWR.

In terms of assembly, efficient DNA binding requires dimerization with another bHLH protein. Homodimer or heterodimer with E proteins such as TCF3. ID1 binds preferentially to TCF3 but does not interact efficiently with TWIST1 so ID1 levels control the amount of TCF3 available to dimerize with TWIST and thus determine the type of dimer formed.

It is found in the nucleus. Functionally, acts as a transcriptional regulator. Inhibits myogenesis by sequestrating E proteins, inhibiting trans-activation by MEF2, and inhibiting DNA-binding by MYOD1 through physical interaction. This interaction probably involves the basic domains of both proteins. Also represses expression of pro-inflammatory cytokines such as TNFA and IL1B. Regulates cranial suture patterning and fusion. Activates transcription as a heterodimer with E proteins. Regulates gene expression differentially, depending on dimer composition. Homodimers induce expression of FGFR2 and POSTN while heterodimers repress FGFR2 and POSTN expression and induce THBS1 expression. Heterodimerization is also required for osteoblast differentiation. Represses the activity of the circadian transcriptional activator: NPAS2-BMAL1 heterodimer. The polypeptide is Twist-related protein 1 (TWIST1) (Pan troglodytes (Chimpanzee)).